Consider the following 149-residue polypeptide: SsrA-binding protein (149 aa).

Belongs to the SmpB family.

Its subcellular location is the cytoplasm. Its function is as follows. Required for rescue of stalled ribosomes mediated by trans-translation. Binds to transfer-messenger RNA (tmRNA), required for stable association of tmRNA with ribosomes. tmRNA and SmpB together mimic tRNA shape, replacing the anticodon stem-loop with SmpB. tmRNA is encoded by the ssrA gene; the 2 termini fold to resemble tRNA(Ala) and it encodes a 'tag peptide', a short internal open reading frame. During trans-translation Ala-aminoacylated tmRNA acts like a tRNA, entering the A-site of stalled ribosomes, displacing the stalled mRNA. The ribosome then switches to translate the ORF on the tmRNA; the nascent peptide is terminated with the 'tag peptide' encoded by the tmRNA and targeted for degradation. The ribosome is freed to recommence translation, which seems to be the essential function of trans-translation. This Acholeplasma laidlawii (strain PG-8A) protein is SsrA-binding protein.